Here is a 152-residue protein sequence, read N- to C-terminus: Protein FYV5 (152 aa).

The next 5 helical transmembrane spans lie at 26-46, 56-76, 82-102, 106-126, and 127-147; these read IISICFSMLSFVFDFSVRICS, LISSSAFKVVSAFSLAGSCVL, VGIIVSLLLFNFSTCNFVLFL, LIDLFFCTFLPTPTFLPTPFF, and FMLHLPIFSLLNALELLYLII.

The protein resides in the cell membrane. It is found in the secreted. It localises to the cell wall. Involved in maintaining an adequate ionic strength homeostasis of the cellular aqueous environment, necessary for normal growth rate. Required for survival upon exposure to K1 killer toxin and hence plays a role in cell wall glucan synthesis. Required for dithiothreitol (DTT) resistance. Involved in cell cycle progression. This is Protein FYV5 (FYV5) from Saccharomyces cerevisiae (strain ATCC 204508 / S288c) (Baker's yeast).